The chain runs to 216 residues: Pyrophosphatase PpaX (216 aa).

Aspartate 9 acts as the Nucleophile in catalysis.

This sequence belongs to the HAD-like hydrolase superfamily. PpaX family. Mg(2+) is required as a cofactor.

The catalysed reaction is diphosphate + H2O = 2 phosphate + H(+). Hydrolyzes pyrophosphate formed during P-Ser-HPr dephosphorylation by HPrK/P. Might play a role in controlling the intracellular pyrophosphate pool. The chain is Pyrophosphatase PpaX from Bacillus cereus (strain G9842).